We begin with the raw amino-acid sequence, 311 residues long: Ribosomal RNA small subunit methyltransferase H (311 aa).

S-adenosyl-L-methionine-binding positions include 41 to 43 (GGH), Asp61, Phe85, Asp102, and Gln109.

It belongs to the methyltransferase superfamily. RsmH family.

Its subcellular location is the cytoplasm. It carries out the reaction cytidine(1402) in 16S rRNA + S-adenosyl-L-methionine = N(4)-methylcytidine(1402) in 16S rRNA + S-adenosyl-L-homocysteine + H(+). Specifically methylates the N4 position of cytidine in position 1402 (C1402) of 16S rRNA. The sequence is that of Ribosomal RNA small subunit methyltransferase H from Paracidovorax citrulli (strain AAC00-1) (Acidovorax citrulli).